A 304-amino-acid polypeptide reads, in one-letter code: Probable aspartoacylase (304 aa).

Zn(2+) is bound by residues H13 and E16. Substrate contacts are provided by residues R55 and 62–63 (NR). H104 lines the Zn(2+) pocket. Positions 162 and 272 each coordinate substrate.

Belongs to the AspA/AstE family. Aspartoacylase subfamily. Zn(2+) serves as cofactor.

The enzyme catalyses an N-acyl-L-aspartate + H2O = a carboxylate + L-aspartate. The polypeptide is Probable aspartoacylase (Synechococcus sp. (strain CC9605)).